The following is a 224-amino-acid chain: uncharacterized protein (224 aa).

The next 4 membrane-spanning stretches (helical) occupy residues Ala25–Ile45, Val56–Pro76, Glu107–Val127, and Ile149–Phe169.

It is found in the cell membrane. This is an uncharacterized protein from Mycoplasma pneumoniae (strain ATCC 29342 / M129 / Subtype 1) (Mycoplasmoides pneumoniae).